A 317-amino-acid chain; its full sequence is Xylose/arabinose import permease protein XacH (317 aa).

The next 6 helical transmembrane spans lie at 40–60, 98–118, 132–152, 179–199, 241–261, and 290–310; these read GIPF…NFAI, LVLL…LAIL, VYLL…LWMF, IALG…TMVV, AAVV…ALVG, and AAIA…YLYY. In terms of domain architecture, ABC transmembrane type-1 spans 94–309; that stretch reads AQNNLVLLVG…ALGVIGPYLY (216 aa).

It belongs to the binding-protein-dependent transport system permease family. As to quaternary structure, the complex is composed of two ATP-binding proteins (XacJ and XacK), two transmembrane proteins (XacH and XacI) and a solute-binding protein (XacG).

It is found in the cell membrane. In terms of biological role, part of the ABC transporter complex XacGHIJK involved in the uptake of xylose and arabinose. Responsible for the translocation of the substrate across the membrane. The sequence is that of Xylose/arabinose import permease protein XacH from Haloferax volcanii (strain ATCC 29605 / DSM 3757 / JCM 8879 / NBRC 14742 / NCIMB 2012 / VKM B-1768 / DS2) (Halobacterium volcanii).